The chain runs to 222 residues: Putative N-acetylmannosamine-6-phosphate 2-epimerase (222 aa).

This sequence belongs to the NanE family.

The catalysed reaction is an N-acyl-D-glucosamine 6-phosphate = an N-acyl-D-mannosamine 6-phosphate. It participates in amino-sugar metabolism; N-acetylneuraminate degradation; D-fructose 6-phosphate from N-acetylneuraminate: step 3/5. In terms of biological role, converts N-acetylmannosamine-6-phosphate (ManNAc-6-P) to N-acetylglucosamine-6-phosphate (GlcNAc-6-P). The protein is Putative N-acetylmannosamine-6-phosphate 2-epimerase of Staphylococcus saprophyticus subsp. saprophyticus (strain ATCC 15305 / DSM 20229 / NCIMB 8711 / NCTC 7292 / S-41).